Here is a 290-residue protein sequence, read N- to C-terminus: Beta carbonic anhydrase 6, mitochondrial (290 aa).

A mitochondrion-targeting transit peptide spans 1–20 (MAFTLGGRARRLVSATSVHQ). Residue serine 122 is modified to Phosphoserine. An S-nitrosocysteine modification is found at cysteine 226.

Belongs to the beta-class carbonic anhydrase family. In terms of tissue distribution, strongly expressed in aerial tissues including leaves, stems, flowers and siliques, and, to a lower extent, in roots. Accumulates in guard cells.

The protein resides in the mitochondrion. The enzyme catalyses hydrogencarbonate + H(+) = CO2 + H2O. In terms of biological role, reversible hydration of carbon dioxide. In Arabidopsis thaliana (Mouse-ear cress), this protein is Beta carbonic anhydrase 6, mitochondrial (BCA6).